The sequence spans 311 residues: Putative dihydroorotate dehydrogenase A (fumarate) (311 aa).

Residues K45, 69–73, and N128 contribute to the substrate site; that span reads NSMGL. 45 to 46 is a binding site for FMN; it reads KT. Position 128 (N128) interacts with FMN. The active-site Nucleophile is the C131. FMN-binding residues include K165 and V193. 194–195 is a substrate binding site; the sequence is NS. FMN-binding positions include G220, 248 to 249, and 270 to 271; these read GG and GT.

It belongs to the dihydroorotate dehydrogenase family. Type 1 subfamily. In terms of assembly, homodimer. The cofactor is FMN.

It localises to the cytoplasm. It catalyses the reaction (S)-dihydroorotate + fumarate = orotate + succinate. The protein operates within pyrimidine metabolism; UMP biosynthesis via de novo pathway. Functionally, catalyzes the conversion of dihydroorotate to orotate with fumarate as the electron acceptor. In Streptococcus equi subsp. equi (strain 4047), this protein is Putative dihydroorotate dehydrogenase A (fumarate) (pyrD).